A 298-amino-acid polypeptide reads, in one-letter code: 33 kDa chaperonin (298 aa).

Disulfide bonds link Cys239/Cys241 and Cys272/Cys275.

It belongs to the HSP33 family. Post-translationally, under oxidizing conditions two disulfide bonds are formed involving the reactive cysteines. Under reducing conditions zinc is bound to the reactive cysteines and the protein is inactive.

It localises to the cytoplasm. Functionally, redox regulated molecular chaperone. Protects both thermally unfolding and oxidatively damaged proteins from irreversible aggregation. Plays an important role in the bacterial defense system toward oxidative stress. The sequence is that of 33 kDa chaperonin from Picosynechococcus sp. (strain ATCC 27264 / PCC 7002 / PR-6) (Agmenellum quadruplicatum).